Here is a 127-residue protein sequence, read N- to C-terminus: Glycine cleavage system H protein (127 aa).

The 83-residue stretch at 22-104 (KVRIGITHFA…YEKAWMIVVE (83 aa)) folds into the Lipoyl-binding domain. At Lys-63 the chain carries N6-lipoyllysine.

This sequence belongs to the GcvH family. The glycine cleavage system is composed of four proteins: P, T, L and H. (R)-lipoate serves as cofactor.

Functionally, the glycine cleavage system catalyzes the degradation of glycine. The H protein shuttles the methylamine group of glycine from the P protein to the T protein. In terms of biological role, is also involved in protein lipoylation via its role as an octanoyl/lipoyl carrier protein intermediate. The sequence is that of Glycine cleavage system H protein from Bacillus pumilus (strain SAFR-032).